The sequence spans 75 residues: U6-lycotoxin-Ls1c (75 aa).

The first 21 residues, 1–21, serve as a signal peptide directing secretion; sequence MKLLLFTALVLVVISLIEVEA. A propeptide spanning residues 22–25 is cleaved from the precursor; it reads ENER. 4 disulfide bridges follow: cysteine 27–cysteine 42, cysteine 34–cysteine 47, cysteine 41–cysteine 65, and cysteine 49–cysteine 63.

The protein belongs to the neurotoxin 19 (CSTX) family. 06 (U6-Lctx) subfamily. Expressed by the venom gland.

It localises to the secreted. The polypeptide is U6-lycotoxin-Ls1c (Lycosa singoriensis (Wolf spider)).